We begin with the raw amino-acid sequence, 111 residues long: Integration host factor subunit alpha (111 aa).

The protein belongs to the bacterial histone-like protein family. As to quaternary structure, heterodimer of an alpha and a beta chain.

Its function is as follows. This protein is one of the two subunits of integration host factor, a specific DNA-binding protein that functions in genetic recombination as well as in transcriptional and translational control. This chain is Integration host factor subunit alpha, found in Polaromonas sp. (strain JS666 / ATCC BAA-500).